We begin with the raw amino-acid sequence, 160 residues long: SsrA-binding protein (160 aa).

A disordered region spans residues 132–160 (KEFDKRDTMRERDSNRELQRAVRNKGKEE).

This sequence belongs to the SmpB family.

The protein localises to the cytoplasm. Its function is as follows. Required for rescue of stalled ribosomes mediated by trans-translation. Binds to transfer-messenger RNA (tmRNA), required for stable association of tmRNA with ribosomes. tmRNA and SmpB together mimic tRNA shape, replacing the anticodon stem-loop with SmpB. tmRNA is encoded by the ssrA gene; the 2 termini fold to resemble tRNA(Ala) and it encodes a 'tag peptide', a short internal open reading frame. During trans-translation Ala-aminoacylated tmRNA acts like a tRNA, entering the A-site of stalled ribosomes, displacing the stalled mRNA. The ribosome then switches to translate the ORF on the tmRNA; the nascent peptide is terminated with the 'tag peptide' encoded by the tmRNA and targeted for degradation. The ribosome is freed to recommence translation, which seems to be the essential function of trans-translation. The chain is SsrA-binding protein from Pseudomonas putida (strain ATCC 47054 / DSM 6125 / CFBP 8728 / NCIMB 11950 / KT2440).